The following is a 112-amino-acid chain: cAMP-regulated phosphoprotein 19 (112 aa).

Residues 1-11 (MSAESPEPASA) are compositionally biased toward low complexity. The tract at residues 1–48 (MSAESPEPASAEEQKEMEDKVISPEKAEEAKLKARYPHLGQKPGGSDF) is disordered. Residue serine 2 is modified to N-acetylserine. The span at 12–32 (EEQKEMEDKVISPEKAEEAKL) shows a compositional bias: basic and acidic residues. Phosphoserine; by GWL is present on residues serine 62 and serine 104. The interval 73–112 (KNKQLPTAAPDKTEVTGDHIPTPQDLPQRKPSLVASKLAG) is disordered. Serine 104 is modified (phosphoserine; by PKA).

It belongs to the endosulfine family. In terms of assembly, interacts (when phosphorylated at Ser-62) with PPP2R2D. In terms of processing, phosphorylation at Ser-62 by MASTL/GWL during mitosis is essential for interaction with PPP2R2D (PR55-delta) and subsequent inactivation of PP2A.

The protein localises to the cytoplasm. Its function is as follows. Protein phosphatase inhibitor that specifically inhibits protein phosphatase 2A (PP2A) during mitosis. Inhibition of PP2A is enhanced when ARPP19 is phosphorylated. When phosphorylated at Ser-62 during mitosis, specifically interacts with PPP2R2D (PR55-delta) and inhibits its activity, leading to inactivation of PP2A, an essential condition to keep cyclin-B1-CDK1 activity high during M phase. This is cAMP-regulated phosphoprotein 19 (ARPP19) from Gallus gallus (Chicken).